A 953-amino-acid polypeptide reads, in one-letter code: Translation initiation factor IF-2 (953 aa).

2 disordered regions span residues serine 48–phenylalanine 212 and threonine 279–leucine 367. Basic and acidic residues-rich tracts occupy residues threonine 80–glutamine 89, phenylalanine 98–alanine 111, and glutamine 140–lysine 188. Polar residues-rich tracts occupy residues arginine 191–serine 207 and lysine 282–threonine 291. Positions alanine 300–lysine 317 are enriched in basic and acidic residues. The segment covering serine 322–asparagine 338 has biased composition (low complexity). Basic residues predominate over residues lysine 339–asparagine 348. The 170-residue stretch at glutamate 454–lysine 623 folds into the tr-type G domain. The interval glycine 463–threonine 470 is G1. Position 463 to 470 (glycine 463 to threonine 470) interacts with GTP. Residues glycine 488 to histidine 492 are G2. Positions aspartate 509–glycine 512 are G3. Residues aspartate 509 to histidine 513 and asparagine 563 to aspartate 566 each bind GTP. The interval asparagine 563–aspartate 566 is G4. Positions serine 599–lysine 601 are G5.

This sequence belongs to the TRAFAC class translation factor GTPase superfamily. Classic translation factor GTPase family. IF-2 subfamily.

It localises to the cytoplasm. Functionally, one of the essential components for the initiation of protein synthesis. Protects formylmethionyl-tRNA from spontaneous hydrolysis and promotes its binding to the 30S ribosomal subunits. Also involved in the hydrolysis of GTP during the formation of the 70S ribosomal complex. This Streptococcus pyogenes serotype M3 (strain ATCC BAA-595 / MGAS315) protein is Translation initiation factor IF-2.